The sequence spans 387 residues: Chlorophyll synthase, chloroplastic (387 aa).

A chloroplast-targeting transit peptide spans 1–57 (MTSILNTVSTIHSSRVTSVDRVGVLSLRNSDSVEFTRRRSGFSTLIYESPGRRFVVR). Residues 62 to 81 (DTDKVKSQTPDKAPAGGSSI) are disordered. 7 helical membrane-spanning segments follow: residues 182–202 (VITQ…ILDV), 210–230 (TVFY…APPL), 241–261 (FALG…LFGT), 266–286 (VVVL…VNDF), 311–331 (WICV…LLAS), 336–356 (YALA…KYFL), and 364–384 (VKYQ…TALA).

The protein belongs to the UbiA prenyltransferase family. Chlorophyll synthase subfamily. Low level in flower buds, flowers, stems, leaves, greening cotyledons and immature siliques, but not in mature siliques or seeds.

Its subcellular location is the plastid. It is found in the chloroplast membrane. It carries out the reaction phytyl diphosphate + chlorophyllide a + H(+) = chlorophyll a + diphosphate. It participates in porphyrin-containing compound metabolism; chlorophyll biosynthesis. In terms of biological role, involved in one of the last steps of the biosynthesis of chlorophyll a. Catalyzes the esterification of chlorophillide a or b with a preference for geranylgeranyldiphosphate (GGPP) rather than for phytyldiphosphate (PhyPP). The chain is Chlorophyll synthase, chloroplastic (CHLG) from Arabidopsis thaliana (Mouse-ear cress).